Reading from the N-terminus, the 103-residue chain is Small ribosomal subunit protein uS10 (103 aa).

The protein belongs to the universal ribosomal protein uS10 family. In terms of assembly, part of the 30S ribosomal subunit.

In terms of biological role, involved in the binding of tRNA to the ribosomes. The polypeptide is Small ribosomal subunit protein uS10 (Shewanella baltica (strain OS223)).